Reading from the N-terminus, the 294-residue chain is Ribosomal RNA small subunit methyltransferase A (294 aa).

6 residues coordinate S-adenosyl-L-methionine: N29, V31, G56, E77, D107, and N126.

This sequence belongs to the class I-like SAM-binding methyltransferase superfamily. rRNA adenine N(6)-methyltransferase family. RsmA subfamily.

Its subcellular location is the cytoplasm. The enzyme catalyses adenosine(1518)/adenosine(1519) in 16S rRNA + 4 S-adenosyl-L-methionine = N(6)-dimethyladenosine(1518)/N(6)-dimethyladenosine(1519) in 16S rRNA + 4 S-adenosyl-L-homocysteine + 4 H(+). Specifically dimethylates two adjacent adenosines (A1518 and A1519) in the loop of a conserved hairpin near the 3'-end of 16S rRNA in the 30S particle. May play a critical role in biogenesis of 30S subunits. This chain is Ribosomal RNA small subunit methyltransferase A, found in Mycobacterium sp. (strain JLS).